The chain runs to 199 residues: Probable GTP-binding protein EngB (199 aa).

An EngB-type G domain is found at 28–199 (DLPEIALAGR…DSWDAILEQV (172 aa)). Residues 36–43 (GRSNVGKS), 63–67 (GKTQL), 81–84 (DVPG), 148–151 (TKAD), and 180–182 (FSS) contribute to the GTP site. 2 residues coordinate Mg(2+): Ser-43 and Thr-65.

It belongs to the TRAFAC class TrmE-Era-EngA-EngB-Septin-like GTPase superfamily. EngB GTPase family. It depends on Mg(2+) as a cofactor.

Functionally, necessary for normal cell division and for the maintenance of normal septation. This Streptococcus pyogenes serotype M28 (strain MGAS6180) protein is Probable GTP-binding protein EngB.